We begin with the raw amino-acid sequence, 423 residues long: Serine--tRNA ligase (423 aa).

229–231 is a binding site for L-serine; sequence TAE. ATP is bound at residue 260–262; sequence RKE. Glu283 contacts L-serine. An ATP-binding site is contributed by 347 to 350; sequence EISS. L-serine is bound at residue Ser383.

The protein belongs to the class-II aminoacyl-tRNA synthetase family. Type-1 seryl-tRNA synthetase subfamily. Homodimer. The tRNA molecule binds across the dimer.

It localises to the cytoplasm. The catalysed reaction is tRNA(Ser) + L-serine + ATP = L-seryl-tRNA(Ser) + AMP + diphosphate + H(+). It catalyses the reaction tRNA(Sec) + L-serine + ATP = L-seryl-tRNA(Sec) + AMP + diphosphate + H(+). Its pathway is aminoacyl-tRNA biosynthesis; selenocysteinyl-tRNA(Sec) biosynthesis; L-seryl-tRNA(Sec) from L-serine and tRNA(Sec): step 1/1. Its function is as follows. Catalyzes the attachment of serine to tRNA(Ser). Is also able to aminoacylate tRNA(Sec) with serine, to form the misacylated tRNA L-seryl-tRNA(Sec), which will be further converted into selenocysteinyl-tRNA(Sec). This Syntrophotalea carbinolica (strain DSM 2380 / NBRC 103641 / GraBd1) (Pelobacter carbinolicus) protein is Serine--tRNA ligase.